The chain runs to 82 residues: Savignygrin (+) (82 aa).

A signal peptide spans 1–21 (MQANIFVFAFLLLSVAVAAYG). 3 disulfides stabilise this stretch: C26/C79, C34/C59, and C53/C75. Residues 35–37 (RGD) carry the Cell attachment site motif.

As to expression, expressed in salivary glands.

Its subcellular location is the cytoplasmic vesicle. It localises to the secretory vesicle. It is found in the secreted. In terms of biological role, tick salivary platelet aggregation inhibitor that plays an important part in the anti-hemostatic strategy of ticks. Inhibits platelet aggregation induced by ADP (IC(50)=130 nM), collagen, the thrombin receptor-activating peptide, and epinephrine, although platelets are activated and their shape changed. Binding to platelets is similar for resting and activated platelets (Kd=50-70 nM). Acts by specifically binding to platelet membrane glycoprotein IIb-IIIa (ITGA2B/ITGB3) in a divalent metal ion dependent manner. In contrast to many disintegrins which only interacts with the beta-3 subunit, this protein interacts with the two subunits (alpha-IIb and beta-3). Also causes disaggregation of aggregated platelets without influencing the activated spherical shape associated with aggregated platelets and causes a decrease in the number of pseudopodia on the activated platelet surface. Does not show any inhibitory activity for the different serine proteases tested. This chain is Savignygrin (+), found in Ornithodoros kalahariensis (Tick).